Here is a 292-residue protein sequence, read N- to C-terminus: 2-(5''-triphosphoribosyl)-3'-dephosphocoenzyme-A synthase (292 aa).

The protein belongs to the CitG/MdcB family.

It carries out the reaction 3'-dephospho-CoA + ATP = 2'-(5''-triphospho-alpha-D-ribosyl)-3'-dephospho-CoA + adenine. In terms of biological role, catalyzes the formation of 2-(5''-triphosphoribosyl)-3'-dephosphocoenzyme-A, the precursor of the prosthetic group of the holo-acyl carrier protein (gamma chain) of citrate lyase, from ATP and dephospho-CoA. The polypeptide is 2-(5''-triphosphoribosyl)-3'-dephosphocoenzyme-A synthase (Escherichia coli O139:H28 (strain E24377A / ETEC)).